Consider the following 855-residue polypeptide: RE1-silencing transcription factor (855 aa).

The C2H2-type 1 zinc-finger motif lies at phenylalanine 141–histidine 163. The disordered stretch occupies residues asparagine 172 to asparagine 199. The segment covering proline 186–asparagine 199 has biased composition (polar residues). 7 C2H2-type zinc fingers span residues isoleucine 204–histidine 226, phenylalanine 236–histidine 258, phenylalanine 264–histidine 286, phenylalanine 292–histidine 314, phenylalanine 320–histidine 343, leucine 349–histidine 371, and phenylalanine 377–histidine 400. The disordered stretch occupies residues asparagine 458–serine 811. Basic and acidic residues-rich tracts occupy residues glutamate 462–aspartate 472, asparagine 481–alanine 496, and alanine 504–leucine 535. Residues serine 548–threonine 569 show a composition bias toward polar residues. Residues glutamine 570–serine 580 are compositionally biased toward basic and acidic residues. Positions glutamine 594–lysine 604 are enriched in basic residues. A compositionally biased stretch (basic and acidic residues) spans arginine 628 to glutamine 638. The span at arginine 639–aspartate 648 shows a compositional bias: basic residues. A compositionally biased stretch (polar residues) spans proline 652 to proline 662. 2 stretches are compositionally biased toward basic and acidic residues: residues proline 711–glutamate 721 and lysine 799–serine 811. The segment at histidine 818–histidine 840 adopts a C2H2-type 9 zinc-finger fold.

Its subcellular location is the nucleus. The protein localises to the cytoplasm. Functionally, transcriptional repressor which binds neuron-restrictive silencer element (NRSE) and represses neuronal gene transcription in non-neuronal cells. The polypeptide is RE1-silencing transcription factor (rest) (Danio rerio (Zebrafish)).